The primary structure comprises 476 residues: Glutamyl-tRNA(Gln) amidotransferase subunit A (476 aa).

Residues lysine 77 and serine 152 each act as charge relay system in the active site. Serine 176 functions as the Acyl-ester intermediate in the catalytic mechanism.

This sequence belongs to the amidase family. GatA subfamily. Heterotrimer of A, B and C subunits.

The enzyme catalyses L-glutamyl-tRNA(Gln) + L-glutamine + ATP + H2O = L-glutaminyl-tRNA(Gln) + L-glutamate + ADP + phosphate + H(+). In terms of biological role, allows the formation of correctly charged Gln-tRNA(Gln) through the transamidation of misacylated Glu-tRNA(Gln) in organisms which lack glutaminyl-tRNA synthetase. The reaction takes place in the presence of glutamine and ATP through an activated gamma-phospho-Glu-tRNA(Gln). This Acidobacterium capsulatum (strain ATCC 51196 / DSM 11244 / BCRC 80197 / JCM 7670 / NBRC 15755 / NCIMB 13165 / 161) protein is Glutamyl-tRNA(Gln) amidotransferase subunit A.